Reading from the N-terminus, the 73-residue chain is Bacterioferritin-associated ferredoxin (73 aa).

Positions 4 and 6 each coordinate [2Fe-2S] cluster. 2 residues coordinate phosphate: Arg26 and Arg29. Positions 38 and 41 each coordinate [2Fe-2S] cluster. Residue Lys46 coordinates phosphate.

The protein belongs to the Bfd family. As to quaternary structure, monomer. Interacts with BfrB; up to 12 Bfd proteins can bind to the BfrB bacterioferritin complex (BFR). One Bfd protein binds to a BfrB dimer in the BFR, with the [2Fe-2S] cluster positioned about 22 Angstroms above the heme of BfrB. Does not interact with FtnA. [2Fe-2S] cluster is required as a cofactor. The cofactor is phosphate.

Required for mobilization of iron from the bacterioferritin (BFR) complex, composed of BfrB and FtnA in varying proportions; mobilization requires the [2Fe-2S] cluster of this protein. Reduction of the BfrB heme group occurs in the presence of Bfd, strongly suggesting that the BfrB-Bfd complex allows heme to mediate electron transfer from FPR to the Fe(3+) iron core in the BFR prior to its release as Fe(2+). This Pseudomonas aeruginosa (strain ATCC 15692 / DSM 22644 / CIP 104116 / JCM 14847 / LMG 12228 / 1C / PRS 101 / PAO1) protein is Bacterioferritin-associated ferredoxin.